The following is a 212-amino-acid chain: Fucoxanthin-chlorophyll a-c binding protein E, chloroplastic (212 aa).

The N-terminal 34 residues, 1-34 (MAIACAAAPGLRGAEPFNGAALATSAKSSSAMKM), are a transit peptide targeting the chloroplast. Helical transmembrane passes span 76 to 96 (IAML…PGML), 117 to 137 (IPPL…LFVV), and 178 to 198 (GRAA…SNQP).

Belongs to the fucoxanthin chlorophyll protein family. As to quaternary structure, the LHC complex of chromophytic algae is composed of fucoxanthin, chlorophyll A and C bound non-covalently by fucoxanthin chlorophyll proteins (FCPs). The ratio of pigments in this LHC is; fucoxanthin: chlorophyll C: chlorophyll A; (0.6-1): (0.1-0.3): (1).

The protein resides in the plastid. Its subcellular location is the chloroplast thylakoid membrane. Functionally, the light-harvesting complex (LHC) functions as a light receptor, it captures and delivers excitation energy to photosystems with which it is closely associated. Energy is transferred from the carotenoid and chlorophyll C (or B) to chlorophyll A and the photosynthetic reaction centers where it is used to synthesize ATP and reducing power. This Macrocystis pyrifera (Giant kelp) protein is Fucoxanthin-chlorophyll a-c binding protein E, chloroplastic (FCPE).